Reading from the N-terminus, the 1366-residue chain is DNA-directed RNA polymerase subunit beta' (1366 aa).

Residues 1 to 23 (MTSSKPKKSSRVRKTSKNSKKNN) are compositionally biased toward basic residues. The tract at residues 1-25 (MTSSKPKKSSRVRKTSKNSKKNNKI) is disordered. Positions 248, 315, 322, and 325 each coordinate Zn(2+). The disordered stretch occupies residues 1290–1366 (DYTVDMPQSP…LQEEGLLSDE (77 aa)). Polar residues predominate over residues 1295-1305 (MPQSPTVSSTA). Positions 1354–1366 (LEGLQEEGLLSDE) are enriched in low complexity.

This sequence belongs to the RNA polymerase beta' chain family. RpoC2 subfamily. As to quaternary structure, in cyanobacteria the RNAP catalytic core is composed of 2 alpha, 1 beta, 1 beta', 1 gamma and 1 omega subunit. When a sigma factor is associated with the core the holoenzyme is formed, which can initiate transcription. Requires Zn(2+) as cofactor.

It catalyses the reaction RNA(n) + a ribonucleoside 5'-triphosphate = RNA(n+1) + diphosphate. Its function is as follows. DNA-dependent RNA polymerase catalyzes the transcription of DNA into RNA using the four ribonucleoside triphosphates as substrates. The polypeptide is DNA-directed RNA polymerase subunit beta' (Prochlorococcus marinus (strain MIT 9515)).